Reading from the N-terminus, the 55-residue chain is uncharacterized protein (55 aa).

Residues 1-19 (MQILLVVRLVLLWLGGLSA) form the signal peptide.

This is an uncharacterized protein from Orgyia pseudotsugata multicapsid polyhedrosis virus (OpMNPV).